The chain runs to 105 residues: ATP-dependent Clp protease adapter protein ClpS (105 aa).

The protein belongs to the ClpS family. In terms of assembly, binds to the N-terminal domain of the chaperone ClpA.

Its function is as follows. Involved in the modulation of the specificity of the ClpAP-mediated ATP-dependent protein degradation. The sequence is that of ATP-dependent Clp protease adapter protein ClpS from Aeromonas hydrophila subsp. hydrophila (strain ATCC 7966 / DSM 30187 / BCRC 13018 / CCUG 14551 / JCM 1027 / KCTC 2358 / NCIMB 9240 / NCTC 8049).